The sequence spans 191 residues: MSRLFLPVLAIVLVSIGASHTASLEWPSNLVALSSVKSSQLLPIASEDSVELADGSSGSVSSSAAQPEDQSQEEAEEQQVSSASSGSADPISGRLVSAGIPVSVPLPLILAARNGLRTVLTIQEPAVAKVGEVVQHVPTAVSHQTQTVVHDHRRLVTPIVAPAVRTTQVIRQQPPLLWSVASDPRVVLIRN.

The first 21 residues, Met-1–Thr-21, serve as a signal peptide directing secretion. The interval Leu-52–Ala-88 is disordered. Composition is skewed to low complexity over residues Gly-55–Asp-69 and Gln-78–Ala-88.

Post-translationally, phosphorylated. As to expression, specifically expressed in cornea (at protein level). Detected in retina and cortex.

The protein resides in the secreted. The protein is Retinin of Drosophila melanogaster (Fruit fly).